We begin with the raw amino-acid sequence, 282 residues long: Light-independent protochlorophyllide reductase iron-sulfur ATP-binding protein (282 aa).

Residues Gly-10–Thr-15 and Lys-39 each bind ATP. Mg(2+) is bound at residue Ser-14. [4Fe-4S] cluster is bound by residues Cys-95 and Cys-129. An ATP-binding site is contributed by Asn-180–Arg-181.

It belongs to the NifH/BchL/ChlL family. In terms of assembly, homodimer. Protochlorophyllide reductase is composed of three subunits; ChlL, ChlN and ChlB. It depends on [4Fe-4S] cluster as a cofactor.

It is found in the plastid. It localises to the cyanelle. It catalyses the reaction chlorophyllide a + oxidized 2[4Fe-4S]-[ferredoxin] + 2 ADP + 2 phosphate = protochlorophyllide a + reduced 2[4Fe-4S]-[ferredoxin] + 2 ATP + 2 H2O. Its pathway is porphyrin-containing compound metabolism; chlorophyll biosynthesis (light-independent). Functionally, component of the dark-operative protochlorophyllide reductase (DPOR) that uses Mg-ATP and reduced ferredoxin to reduce ring D of protochlorophyllide (Pchlide) to form chlorophyllide a (Chlide). This reaction is light-independent. The L component serves as a unique electron donor to the NB-component of the complex, and binds Mg-ATP. This is Light-independent protochlorophyllide reductase iron-sulfur ATP-binding protein from Cyanophora paradoxa.